A 318-amino-acid polypeptide reads, in one-letter code: NLP effector protein 7 (318 aa).

A signal peptide spans 1 to 19 (MRLFAFLWSSVAFLSTVQA). The span at 23–41 (QTASQTQDDSSTPTPTPTD) shows a compositional bias: low complexity. Disordered regions lie at residues 23–42 (QTAS…PTDK) and 51–96 (RTKT…TPDP). A compositionally biased stretch (polar residues) spans 55–65 (PMATPNRTIMP). The N-linked (GlcNAc...) asparagine glycan is linked to Asn-60. Residues 73-96 (TEPPTPEPTYLPTPSPTPAPTPDP) show a composition bias toward pro residues. The short motif at 185–195 (AIMYSWYFPKD) is the Conserved undecapeptide motif I element. The Hepta-peptide GHRHDWE motif II signature appears at 202–208 (GHRHDWE).

Belongs to the Necrosis inducing protein (NPP1) family.

It is found in the secreted. Secreted effector that contributes moderately to virulence during infection by P.capsici. Does not cause visible reaction of C.annuum for several days after inoculation, but by 7 days after inoculation, small necrotic lesions become visible. Leads only to chlorotic areas, without necrosis at 7 days after non-host N.benthamiana leaves infection. This Phytophthora capsici protein is NLP effector protein 7.